Consider the following 362-residue polypeptide: MSMDVTFLGTGAAYPSPTRGASAVVLRCEGECWLFDCGEGTQTQLMKSQLKAGRITKIFITHLHGDHFFGLPGLLCTISLQSGSVVARQPIEIYGPVGLRDFIWRTMELSHTELVFPYVVHELVPTADQCPVEELREFAHMDETDSSPKGQGRTILLDAEENSYCLVDDEQFVVKAFRLFHRIPSFGFSVVEKKRAGKLNAQKLRDLGVPPGPAYGKLKNGISVVLDNGVTISPQDVLKKPMVGRKVCILGDCSGVVGDGGVKLCFEADLLIHEATLDDSQMDKAREHGHSTPQMAAAFAKLCRAKRLVLTHFSQRYKPTALAREGEADGIAELRKQAEAVLELQEVTLAEDFMVIGIPIKK.

Residues histidine 62, histidine 64, aspartate 66, histidine 67, histidine 181, aspartate 252, and histidine 312 each contribute to the Zn(2+) site. Aspartate 66 serves as the catalytic Proton acceptor.

It belongs to the RNase Z family. In terms of assembly, homodimer. The cofactor is Zn(2+).

It is found in the cytoplasm. The protein resides in the cytosol. Its subcellular location is the nucleus. It carries out the reaction Endonucleolytic cleavage of RNA, removing extra 3' nucleotides from tRNA precursor, generating 3' termini of tRNAs. A 3'-hydroxy group is left at the tRNA terminus and a 5'-phosphoryl group is left at the trailer molecule.. Functionally, zinc phosphodiesterase, which displays some tRNA 3'-processing endonuclease activity. Specifically involved in tRNA repair: acts downstream of the ribosome-associated quality control (RQC) pathway by removing a 2',3'-cyclic phosphate from tRNAs following cleavage by ANKZF1. tRNAs are then processed by TRNT1. The polypeptide is Zinc phosphodiesterase ELAC protein 1 (Elac1) (Mus musculus (Mouse)).